A 252-amino-acid chain; its full sequence is Delta-like protein dsl-1 (252 aa).

A signal peptide spans 1-17; that stretch reads MLKYLIFLAILISVVHS. A DSL domain is found at 120–164; it reads IKCNRYWHGLHCDHFCNDDFARTINRRCTQNGTLGCLEGFHGPNC. Cystine bridges form between C122–C131, C135–C147, C155–C164, C173–C181, C175–C197, and C199–C209. The 42-residue stretch at 169–210 folds into the EGF-like domain; the sequence is PADSCKCQNGGKCVSSLENTWAQNGSLICECRLGHFEGKHCE.

In terms of assembly, may interact with lin-12/Notch receptor.

It is found in the secreted. Its function is as follows. Probable secreted Notch ligand involved in the mediation of Notch signaling. Involved in the lin-12/Notch pathway-mediated signaling of cell fate in vulval precursor cells (VPCs), acting redundantly with lag-2, apx-1 and osm-11. May also be involved in glp-1/Notch signaling. This is Delta-like protein dsl-1 from Caenorhabditis elegans.